We begin with the raw amino-acid sequence, 576 residues long: Probable vesicular glutamate transporter eat-4 (576 aa).

Residues 1–69 (MSSWNEAWDR…QTWIGKCRKR (69 aa)) lie on the Cytoplasmic side of the membrane. A disordered region spans residues 25-46 (AAASATGAAPPQQMQEEGNENP). Positions 36–46 (QQMQEEGNENP) are enriched in polar residues. Residues 70–90 (WLLAILANMGFMISFGIRCNF) form a helical membrane-spanning segment. Over 91–121 (GAAKTHMYKNYTDPYGKVHMHEFNWTIDELS) the chain is Extracellular. Residues N100 and N114 are each glycosylated (N-linked (GlcNAc...) asparagine). A helical membrane pass occupies residues 122-142 (VMESSYFYGYLVTQIPAGFLA). Residues 143-150 (AKFPPNKL) lie on the Cytoplasmic side of the membrane. Residues 151–171 (FGFGIGVGAFLNILLPYGFKV) traverse the membrane as a helical segment. Residues 172 to 174 (KSD) are Extracellular-facing. A helical transmembrane segment spans residues 175–195 (YLVAFIQITQGLVQGVCYPAM). Topologically, residues 196–213 (HGVWRYWAPPMERSKLAT) are cytoplasmic. A helical membrane pass occupies residues 214-234 (TAFTGSYAGAVLGLPLSAFLV). Over 235-239 (SYVSW) the chain is Extracellular. The chain crosses the membrane as a helical span at residues 240-260 (AAPFYLYGVCGVIWAILWFCV). Topologically, residues 261–305 (TFEKPAFHPTISQEEKIFIEDAIGHVSNTHPTIRSIPWKAIVTSK) are cytoplasmic. The helical transmembrane segment at 306–325 (PVWAIIVANFARSWTFYLLL) threads the bilayer. The Extracellular segment spans residues 326-344 (QNQLTYMKEALGMKIADSG). A helical transmembrane segment spans residues 345-365 (LLAAIPHLVMGCVVLMGGQLA). Residues 366–381 (DYLRSNKILSTTAVRK) are Cytoplasmic-facing. A helical transmembrane segment spans residues 382–402 (IFNCGGFGGEAAFMLIVAYTT). Topologically, residues 403–406 (SDTT) are extracellular. A helical membrane pass occupies residues 407-427 (AIMALIAAVGMSGFAISGFNV). The Cytoplasmic portion of the chain corresponds to 428 to 437 (NHLDIAPRYA). The helical transmembrane segment at 438 to 458 (AILMGFSNGIGTLAGLTCPFV) threads the bilayer. Over 459 to 471 (TEAFTAHSKHGWT) the chain is Extracellular. A helical membrane pass occupies residues 472–492 (SVFLLASLIHFTGVTFYAVYA). Over 493 to 576 (SGELQEWAEP…VVENPHYQQW (84 aa)) the chain is Cytoplasmic.

This sequence belongs to the major facilitator superfamily. Sodium/anion cotransporter family. VGLUT subfamily. Expressed in neurons of the pharynx and the extrapharyngeal nervous system. Highly expressed in male PHC sensory neurons.

It is found in the cell membrane. Its subcellular location is the synapse. Functionally, required for glutamatergic synaptic transmission. In AWB and AWC sensory neurons, required for the detection of preferred food sources, probably via glutamatergic neurotransmission from sensory neurons. Negatively regulates the turning step of male mating behavior. This Caenorhabditis elegans protein is Probable vesicular glutamate transporter eat-4.